A 216-amino-acid chain; its full sequence is Uracil-DNA glycosylase (216 aa).

The active-site Proton acceptor is the Asp59.

Belongs to the uracil-DNA glycosylase (UDG) superfamily. UNG family.

It localises to the cytoplasm. It catalyses the reaction Hydrolyzes single-stranded DNA or mismatched double-stranded DNA and polynucleotides, releasing free uracil.. Excises uracil residues from the DNA which can arise as a result of misincorporation of dUMP residues by DNA polymerase or due to deamination of cytosine. The sequence is that of Uracil-DNA glycosylase from Idiomarina loihiensis (strain ATCC BAA-735 / DSM 15497 / L2-TR).